The sequence spans 200 residues: NADH-quinone oxidoreductase subunit C (200 aa).

The protein belongs to the complex I 30 kDa subunit family. In terms of assembly, NDH-1 is composed of 14 different subunits. Subunits NuoB, C, D, E, F, and G constitute the peripheral sector of the complex.

Its subcellular location is the cell inner membrane. It carries out the reaction a quinone + NADH + 5 H(+)(in) = a quinol + NAD(+) + 4 H(+)(out). Its function is as follows. NDH-1 shuttles electrons from NADH, via FMN and iron-sulfur (Fe-S) centers, to quinones in the respiratory chain. The immediate electron acceptor for the enzyme in this species is believed to be ubiquinone. Couples the redox reaction to proton translocation (for every two electrons transferred, four hydrogen ions are translocated across the cytoplasmic membrane), and thus conserves the redox energy in a proton gradient. This Cereibacter sphaeroides (strain ATCC 17029 / ATH 2.4.9) (Rhodobacter sphaeroides) protein is NADH-quinone oxidoreductase subunit C.